A 468-amino-acid polypeptide reads, in one-letter code: Dimethylamine methyltransferase MtbB2 (468 aa).

Residue Pyl356 is a non-standard amino acid, pyrrolysine.

It belongs to the dimethylamine methyltransferase family.

The catalysed reaction is Co(I)-[dimethylamine-specific corrinoid protein] + dimethylamine + H(+) = methyl-Co(III)-[dimethylamine-specific corrinoid protein] + methylamine. Its pathway is one-carbon metabolism; methanogenesis from dimethylamine. Catalyzes the transfer of a methyl group from dimethylamine to the corrinoid cofactor of MtbC. The polypeptide is Dimethylamine methyltransferase MtbB2 (mtbB2) (Methanosarcina acetivorans (strain ATCC 35395 / DSM 2834 / JCM 12185 / C2A)).